The sequence spans 78 residues: Translation initiation factor IF-1 (78 aa).

Residues Ser-2–Lys-78 enclose the S1-like domain.

This sequence belongs to the IF-1 family. Component of the 30S ribosomal translation pre-initiation complex which assembles on the 30S ribosome in the order IF-2 and IF-3, IF-1 and N-formylmethionyl-tRNA(fMet); mRNA recruitment can occur at any time during PIC assembly.

The protein localises to the cytoplasm. Its function is as follows. One of the essential components for the initiation of protein synthesis. Stabilizes the binding of IF-2 and IF-3 on the 30S subunit to which N-formylmethionyl-tRNA(fMet) subsequently binds. Helps modulate mRNA selection, yielding the 30S pre-initiation complex (PIC). Upon addition of the 50S ribosomal subunit IF-1, IF-2 and IF-3 are released leaving the mature 70S translation initiation complex. This chain is Translation initiation factor IF-1, found in Aster yellows witches'-broom phytoplasma (strain AYWB).